A 324-amino-acid polypeptide reads, in one-letter code: Endochitinase A2 (324 aa).

An N-terminal signal peptide occupies residues 1-20 (MSKLRIPILLVLFIVSCCSA). Residues 21–61 (EQCGTQAGGALCPGGLCCSKFGWCGSTSEYCGDGCQSQCSG) form the Chitin-binding type-1 domain. Disulfide bonds link C23–C38, C32–C44, C37–C51, and C55–C59. E133 acts as the Proton donor in catalysis. 2 cysteine pairs are disulfide-bonded: C151–C170 and C269–C301. Positions 310-324 (SLPLSSILLDTVAAA) are cleaved as a propeptide — removed in mature form.

Belongs to the glycosyl hydrolase 19 family. Chitinase class I subfamily.

The catalysed reaction is Random endo-hydrolysis of N-acetyl-beta-D-glucosaminide (1-&gt;4)-beta-linkages in chitin and chitodextrins.. Its function is as follows. Defense against chitin-containing fungal pathogens. In Pisum sativum (Garden pea), this protein is Endochitinase A2 (CHI2).